A 700-amino-acid chain; its full sequence is Elongation factor G (700 aa).

The tr-type G domain occupies 6-286 (HKVRNIGIMA…AVIDYLPSPL (281 aa)). GTP contacts are provided by residues 15 to 22 (AHIDAGKT), 79 to 83 (DTPGH), and 133 to 136 (NKMD).

This sequence belongs to the TRAFAC class translation factor GTPase superfamily. Classic translation factor GTPase family. EF-G/EF-2 subfamily.

It localises to the cytoplasm. Its function is as follows. Catalyzes the GTP-dependent ribosomal translocation step during translation elongation. During this step, the ribosome changes from the pre-translocational (PRE) to the post-translocational (POST) state as the newly formed A-site-bound peptidyl-tRNA and P-site-bound deacylated tRNA move to the P and E sites, respectively. Catalyzes the coordinated movement of the two tRNA molecules, the mRNA and conformational changes in the ribosome. The polypeptide is Elongation factor G (Leifsonia xyli subsp. xyli (strain CTCB07)).